A 150-amino-acid chain; its full sequence is MRAVIQRVSSASVAVDGQITGAIARGLLVLLGVAHDDTPADVEWLAGKICALRIFEDDEGRMNRSVVETAGGVLVVSQFTLLASTRKGTRPSFNDAARPELAEPLYAAFLQQVSGRLGRPAASGVFGAMMTVSLVNDGPVTLVIDSHARE.

The Gly-cisPro motif, important for rejection of L-amino acids motif lies at 138-139 (GP).

Belongs to the DTD family. In terms of assembly, homodimer.

The protein localises to the cytoplasm. It catalyses the reaction glycyl-tRNA(Ala) + H2O = tRNA(Ala) + glycine + H(+). It carries out the reaction a D-aminoacyl-tRNA + H2O = a tRNA + a D-alpha-amino acid + H(+). In terms of biological role, an aminoacyl-tRNA editing enzyme that deacylates mischarged D-aminoacyl-tRNAs. Also deacylates mischarged glycyl-tRNA(Ala), protecting cells against glycine mischarging by AlaRS. Acts via tRNA-based rather than protein-based catalysis; rejects L-amino acids rather than detecting D-amino acids in the active site. By recycling D-aminoacyl-tRNA to D-amino acids and free tRNA molecules, this enzyme counteracts the toxicity associated with the formation of D-aminoacyl-tRNA entities in vivo and helps enforce protein L-homochirality. The protein is D-aminoacyl-tRNA deacylase of Opitutus terrae (strain DSM 11246 / JCM 15787 / PB90-1).